A 139-amino-acid chain; its full sequence is ATP synthase epsilon chain (139 aa).

The protein belongs to the ATPase epsilon chain family. F-type ATPases have 2 components, CF(1) - the catalytic core - and CF(0) - the membrane proton channel. CF(1) has five subunits: alpha(3), beta(3), gamma(1), delta(1), epsilon(1). CF(0) has three main subunits: a, b and c.

The protein localises to the cell inner membrane. In terms of biological role, produces ATP from ADP in the presence of a proton gradient across the membrane. The sequence is that of ATP synthase epsilon chain from Salmonella arizonae (strain ATCC BAA-731 / CDC346-86 / RSK2980).